We begin with the raw amino-acid sequence, 547 residues long: MSSSPWEPATLRRVFVVGVGMTKFVKPGAENSRDYPDLAEEAGKKALADAQIPYSAVDQACVGYVFGDSTCGQRAIYHSLGMTGIPIINVNNNCATGSTALFMARQLIQGGVAECVLALGFEKMSKGSLGIKFSDRTIPTDKHVDLLINKYGLSAHPVAPQMFGYAGKEHMEKYGTKIEHFAKIGWKNHKHSVNNPYSQFQDEYSLDEVMASKEVFDFLTILQCCPTSDGAAAAILASEAFVQKYGLQSKAVEILAQEMMTDLPSSFEEKSIIKMVGFDMSKEAARKCYEKSGLTPNDIDVIELHDCFSTNELLTYEALGLCPEGQGATLVDRGDNTYGGKWVINPSGGLISKGHPLGATGLAQCAELCWQLRGEAGKRQVPGAKVALQHNLGIGGAVVVTLYKMGFPEAASSFRTHQIEAVPTSSASDGFKANLVFKEIEKKLEEEGEQFVKKIGGIFAFKVKDGPGGKEATWVVDVKNGKGSVLPNSDKKADCTITMADSDFLALMTGKMNPQSAFFQGKLKITGNMGLAMKLQNLQLQPGNAKL.

Phosphoserine is present on S3. At K132 the chain carries N6-acetyllysine; alternate. K132 carries the post-translational modification N6-succinyllysine; alternate. An N6-succinyllysine modification is found at K168. N6-acetyllysine occurs at positions 173 and 177. K183 is modified (N6-acetyllysine; alternate). K183 is subject to N6-succinyllysine; alternate. K282 bears the N6-succinyllysine mark. K341, K432, K438, K443, and K453 each carry N6-acetyllysine; alternate. K341, K432, K438, K443, and K453 each carry N6-succinyllysine; alternate. An SCP2 domain is found at 433–543; that stretch reads ANLVFKEIEK…KLQNLQLQPG (111 aa). At K464 the chain carries N6-succinyllysine. At K470 the chain carries N6-acetyllysine; alternate. Position 470 is an N6-succinyllysine; alternate (K470). The residue at position 479 (K479) is an N6-succinyllysine. K491 is modified (N6-acetyllysine). K492 and K511 each carry N6-succinyllysine. At S516 the chain carries Phosphoserine. N6-succinyllysine is present on residues K522 and K534. A Microbody targeting signal motif is present at residues 545–547; it reads AKL.

The protein in the N-terminal section; belongs to the thiolase-like superfamily. Thiolase family. As to quaternary structure, interacts with PEX5; the interaction is essential for peroxisomal import. Post-translationally, preSCP2, a protein with a molecular mass of about 15 kDa, is processed into its mature form (SCP2) by proteolytic cleavage of a 20 residue leader sequence after translocation into peroxisomes. As to expression, liver, fibroblasts, and placenta.

The protein resides in the peroxisome. It localises to the cytoplasm. Its subcellular location is the mitochondrion. The protein localises to the endoplasmic reticulum. It carries out the reaction choloyl-CoA + propanoyl-CoA = 3alpha,7alpha,12alpha-trihydroxy-24-oxo-5beta-cholestan-26-oyl-CoA + CoA. The catalysed reaction is 4,8,12-trimethyltridecanoyl-CoA + propanoyl-CoA = 3-oxopristanoyl-CoA + CoA. The enzyme catalyses an acyl-CoA + acetyl-CoA = a 3-oxoacyl-CoA + CoA. It catalyses the reaction hexanoyl-CoA + acetyl-CoA = 3-oxooctanoyl-CoA + CoA. It carries out the reaction tetradecanoyl-CoA + acetyl-CoA = 3-oxohexadecanoyl-CoA + CoA. The catalysed reaction is 3-oxohexadecanedioyl-CoA + CoA = tetradecanedioyl-CoA + acetyl-CoA. The enzyme catalyses propanoyl-CoA + tetradecanoyl-CoA = 3-oxo-2-methylhexadecanoyl-CoA + CoA. It catalyses the reaction butanoyl-CoA + acetyl-CoA = 3-oxohexanoyl-CoA + CoA. It carries out the reaction octanoyl-CoA + acetyl-CoA = 3-oxodecanoyl-CoA + CoA. The catalysed reaction is decanoyl-CoA + acetyl-CoA = 3-oxododecanoyl-CoA + CoA. The enzyme catalyses dodecanoyl-CoA + acetyl-CoA = 3-oxotetradecanoyl-CoA + CoA. It catalyses the reaction hexadecanoyl-CoA + acetyl-CoA = 3-oxooctadecanoyl-CoA + CoA. It carries out the reaction 3-oxo-(9Z-octadecenoyl)-CoA + CoA = (7Z)-hexadecenoyl-CoA + acetyl-CoA. The catalysed reaction is 7-dehydrocholesterol(in) = 7-dehydrocholesterol(out). In terms of biological role, plays a crucial role in the peroxisomal oxidation of branched-chain fatty acids. Catalyzes the last step of the peroxisomal beta-oxidation of branched chain fatty acids and the side chain of the bile acid intermediates di- and trihydroxycoprostanic acids (DHCA and THCA). Also active with medium and long straight chain 3-oxoacyl-CoAs. Stimulates the microsomal conversion of 7-dehydrocholesterol to cholesterol and transfers phosphatidylcholine and 7-dehydrocholesterol between membrances, in vitro. Isoforms SCP2 and SCPx cooperate in peroxisomal oxidation of certain naturally occurring tetramethyl-branched fatty acyl-CoAs. Functionally, mediates the transfer of all common phospholipids, cholesterol and gangliosides from the endoplasmic reticulum to the plasma membrane. May play a role in regulating steroidogenesis. Stimulates the microsomal conversion of 7-dehydrocholesterol to cholesterol. Also binds fatty acids and fatty acyl Coenzyme A (CoA) such as phytanoyl-CoA. Involved in the regulation phospholipid synthesis in endoplasmic reticulum enhancing the incorporation of exogenous fatty acid into glycerides. Seems to stimulate the rate-limiting step in phosphatidic acid formation mediated by GPAT3. Isoforms SCP2 and SCPx cooperate in peroxisomal oxidation of certain naturally occurring tetramethyl-branched fatty acyl-CoAs. The protein is Sterol carrier protein 2 of Homo sapiens (Human).